The primary structure comprises 746 residues: WD repeat-containing and planar cell polarity effector protein fritz homolog (746 aa).

WD repeat units follow at residues 326–374 (IQCV…TLLA) and 375–414 (QTEL…INIQ).

Belongs to the WD repeat fritz family. As to quaternary structure, component of the CPLANE (ciliogenesis and planar polarity effectors) complex, composed of INTU, FUZ and WDPCP. Interacts with CPLANE1.

It is found in the cell membrane. Its subcellular location is the cytoplasm. The protein localises to the cytoskeleton. The protein resides in the cilium axoneme. It localises to the cilium basal body. Functionally, probable effector of the planar cell polarity signaling pathway which regulates the septin cytoskeleton in both ciliogenesis and collective cell movements. Together with FUZ and WDPCP proposed to function as core component of the CPLANE (ciliogenesis and planar polarity effectors) complex involved in the recruitment of peripheral IFT-A proteins to basal bodies. Binds phosphatidylinositol 3-phosphate with highest affinity, followed by phosphatidylinositol 4-phosphate and phosphatidylinositol 5-phosphate. This Homo sapiens (Human) protein is WD repeat-containing and planar cell polarity effector protein fritz homolog (WDPCP).